The following is a 325-amino-acid chain: Protein translocase subunit SecF (325 aa).

The next 6 helical transmembrane spans lie at 36 to 56 (GYIL…TKGF), 148 to 168 (LAQG…IYVG), 175 to 197 (LGFG…FSAL), 202 to 224 (DLTF…IVVF), 254 to 274 (TIIT…FGGP), and 281 to 301 (LALL…AIAI).

The protein belongs to the SecD/SecF family. SecF subfamily. Forms a complex with SecD. Part of the essential Sec protein translocation apparatus which comprises SecA, SecYEG and auxiliary proteins SecDF-YajC and YidC.

It localises to the cell inner membrane. Part of the Sec protein translocase complex. Interacts with the SecYEG preprotein conducting channel. SecDF uses the proton motive force (PMF) to complete protein translocation after the ATP-dependent function of SecA. This is Protein translocase subunit SecF from Haemophilus influenzae (strain ATCC 51907 / DSM 11121 / KW20 / Rd).